Reading from the N-terminus, the 308-residue chain is HPr kinase/phosphorylase (308 aa).

Catalysis depends on residues H138 and K159. G153–S160 is an ATP binding site. Residue S160 coordinates Mg(2+). Catalysis depends on D177, which acts as the Proton acceptor; for phosphorylation activity. Proton donor; for dephosphorylation activity. Residues L201 to D210 are important for the catalytic mechanism of both phosphorylation and dephosphorylation. E202 is a binding site for Mg(2+). R243 is an active-site residue. An important for the catalytic mechanism of dephosphorylation region spans residues Q264–R269.

The protein belongs to the HPrK/P family. As to quaternary structure, homohexamer. Mg(2+) serves as cofactor.

It catalyses the reaction [HPr protein]-L-serine + ATP = [HPr protein]-O-phospho-L-serine + ADP + H(+). The catalysed reaction is [HPr protein]-O-phospho-L-serine + phosphate + H(+) = [HPr protein]-L-serine + diphosphate. Functionally, catalyzes the ATP- as well as the pyrophosphate-dependent phosphorylation of a specific serine residue in HPr, a phosphocarrier protein of the phosphoenolpyruvate-dependent sugar phosphotransferase system (PTS). HprK/P also catalyzes the pyrophosphate-producing, inorganic phosphate-dependent dephosphorylation (phosphorolysis) of seryl-phosphorylated HPr (P-Ser-HPr). This chain is HPr kinase/phosphorylase, found in Bordetella avium (strain 197N).